Here is a 123-residue protein sequence, read N- to C-terminus: Small ribosomal subunit protein uS12 (123 aa).

A 3-methylthioaspartic acid modification is found at aspartate 89. Residues 100-123 (GSLDTSGVSDRKQGRSKYGTKRPK) form a disordered region. Over residues 113–123 (GRSKYGTKRPK) the composition is skewed to basic residues.

Belongs to the universal ribosomal protein uS12 family. In terms of assembly, part of the 30S ribosomal subunit. Contacts proteins S8 and S17. May interact with IF1 in the 30S initiation complex.

With S4 and S5 plays an important role in translational accuracy. In terms of biological role, interacts with and stabilizes bases of the 16S rRNA that are involved in tRNA selection in the A site and with the mRNA backbone. Located at the interface of the 30S and 50S subunits, it traverses the body of the 30S subunit contacting proteins on the other side and probably holding the rRNA structure together. The combined cluster of proteins S8, S12 and S17 appears to hold together the shoulder and platform of the 30S subunit. This chain is Small ribosomal subunit protein uS12, found in Saccharophagus degradans (strain 2-40 / ATCC 43961 / DSM 17024).